Reading from the N-terminus, the 120-residue chain is FK506-binding protein 1A (120 aa).

The region spanning 26-114 (GDNVDVHYKG…IFETELVGIK (89 aa)) is the PPIase FKBP-type domain.

It belongs to the FKBP-type PPIase family. FKBP1 subfamily.

Its subcellular location is the cytoplasm. The catalysed reaction is [protein]-peptidylproline (omega=180) = [protein]-peptidylproline (omega=0). Its function is as follows. PPIases accelerate the folding of proteins. It catalyzes the cis-trans isomerization of proline imidic peptide bonds in oligopeptides. The polypeptide is FK506-binding protein 1A (fkr-2) (Neurospora crassa (strain ATCC 24698 / 74-OR23-1A / CBS 708.71 / DSM 1257 / FGSC 987)).